A 145-amino-acid polypeptide reads, in one-letter code: Immune protein Tsi4 (145 aa).

2 helical membrane passes run 9-29 (IGGLLHASLFSLLGLGLLLAG) and 109-129 (ALWGTGAFLCGFGALFGIVGF).

It localises to the membrane. Its function is as follows. Immunity protein that plays a role in preventing early activation of toxin Tse4. The sequence is that of Immune protein Tsi4 from Pseudomonas aeruginosa (strain ATCC 15692 / DSM 22644 / CIP 104116 / JCM 14847 / LMG 12228 / 1C / PRS 101 / PAO1).